The following is a 1355-amino-acid chain: Phospholipid-transporting ATPase DRS2 (1355 aa).

A compositionally biased stretch (basic and acidic residues) spans 1 to 15 (MNDDRETPPKRKPGE). Residues 1–50 (MNDDRETPPKRKPGEDDTLFDIDFLDDTTSHSGSRSKVTNSHANANYIPP) form a disordered region. The interval 1-104 (MNDDRETPPK…SDAYQPQSLR (104 aa)) is involved in autoinhibition. The Cytoplasmic portion of the chain corresponds to 1–221 (MNDDRETPPK…TFLPKFLFQE (221 aa)). Acidic residues predominate over residues 16 to 26 (DDTLFDIDFLD). The segment covering 30 to 44 (SHSGSRSKVTNSHAN) has biased composition (polar residues). A Phosphoserine modification is found at Ser102. A helical transmembrane segment spans residues 222–242 (FSKYANLFFLCTSAIQQVPHV). Positions 237 to 238 (QQ) are involved in phosphatidylserine substrate recognition. Over 243-246 (SPTN) the chain is Lumenal. Residues 247–267 (RYTTIGTLLVVLIVSAMKECI) traverse the membrane as a helical segment. At 268–449 (EDIKRANSDK…VEKIINRQII (182 aa)) the chain is on the cytoplasmic side. The helical transmembrane segment at 450 to 470 (ALFTVLIVLILISSIGNVIMS) threads the bilayer. Over 471–490 (TADAKHLSYLYLEGTNKAGL) the chain is Lumenal. Residues 491–511 (FFKDFLTFWILFSNLVPISLF) form a helical membrane-spanning segment. Over 512–1012 (VTVELIKYYQ…WSYQRISVAI (501 aa)) the chain is Cytoplasmic. The active-site 4-aspartylphosphate intermediate is Asp560. ATP is bound by residues Asp560, Lys561, Thr562, Glu655, Phe698, Ser700, Lys703, Lys721, Arg755, Thr756, Thr835, Gly836, Asp837, Arg928, and Lys934. Asp560 is a Mg(2+) binding site. Thr562 is a Mg(2+) binding site. Asp954 serves as a coordination point for Mg(2+). ATP contacts are provided by Asn957 and Asp958. Residue Asp958 participates in Mg(2+) binding. Residues 1013–1033 (LYSFYKNTALYMTQFWYVFAN) form a helical membrane-spanning segment. Topologically, residues 1034–1043 (AFSGQSIMES) are lumenal. Residues 1044–1064 (WTMSFYNLFFTVWPPFVIGVF) form a helical membrane-spanning segment. Residues 1065–1094 (DQFVSSRLLERYPQLYKLGQKGQFFSVYIF) are Cytoplasmic-facing. The chain crosses the membrane as a helical span at residues 1095–1115 (WGWIINGFFHSAIVFIGTILI). Over 1116-1131 (YRYGFALNMHGELADH) the chain is Lumenal. A helical transmembrane segment spans residues 1132–1152 (WSWGVTVYTTSVIIVLGKAAL). Residue Lys1149 coordinates a 1,2-diacyl-sn-glycero-3-phospho-(1D-myo-inositol 4-phosphate). The Cytoplasmic segment spans residues 1153-1161 (VTNQWTKFT). The helical transmembrane segment at 1162–1182 (LIAIPGSLLFWLIFFPIYASI) threads the bilayer. Over 1183–1202 (FPHANISREYYGVVKHTYGS) the chain is Lumenal. A helical membrane pass occupies residues 1203–1223 (GVFWLTLIVLPIFALVRDFLW). A 1,2-diacyl-sn-glycero-3-phospho-(1D-myo-inositol 4-phosphate) is bound by residues Arg1219, Trp1223, Lys1224, Tyr1235, and His1236. The Cytoplasmic segment spans residues 1224–1355 (KYYKRMYEPE…SSRDDISFDI (132 aa)). The tract at residues 1230–1282 (YEPETYHVIQEMQKYNISDSRPHVQQFQNAIRKVRQVQRMKKQRGFAFSQAEE) is interaction with GEA2. An involved in autoinhibition region spans residues 1231–1309 (EPETYHVIQE…KYGELQDASA (79 aa)). The disordered stretch occupies residues 1305 to 1355 (QDASANPFNDNNGLGSNDFESAEPFIENPFADGNQNSNRFSSSRDDISFDI). Residues 1307–1323 (ASANPFNDNNGLGSNDF) are compositionally biased toward polar residues. Basic and acidic residues predominate over residues 1346 to 1355 (SSRDDISFDI).

Belongs to the cation transport ATPase (P-type) (TC 3.A.3) family. Type IV subfamily. In terms of assembly, component of a flippase complex consisting of DRS2 and CDC50. Interacts with CDC50; the interaction is direct, is required for their mutual export from the endoplasmic reticulum, and preferentially occurs when DRS2 is in the E2P state. Interacts (via C-terminus) with GEA2 (via SEC7 domain); the interaction is direct. Interacts with GEA1. The cofactor is Mg(2+).

It is found in the golgi apparatus. It localises to the trans-Golgi network membrane. Its subcellular location is the endosome membrane. The catalysed reaction is ATP + H2O + phospholipidSide 1 = ADP + phosphate + phospholipidSide 2.. It catalyses the reaction a 1,2-diacyl-sn-glycero-3-phospho-L-serine(out) + ATP + H2O = a 1,2-diacyl-sn-glycero-3-phospho-L-serine(in) + ADP + phosphate + H(+). The enzyme catalyses a 1,2-diacyl-sn-glycero-3-phosphoethanolamine(out) + ATP + H2O = a 1,2-diacyl-sn-glycero-3-phosphoethanolamine(in) + ADP + phosphate + H(+). Its activity is regulated as follows. Allosterically activated by binding 1,2-diacyl-sn-glycero-3-phospho-(1D-myo-inositol 4-phosphate) (phosphatidylinositol 4-phosphate). Inhibited by orthovanadate, N-ethylmaleimide, trifluoroberyllate and tetrafluoroaluminate; orthovanadate and N-ethylmaleimide inhibit phosphorylation of the active site aspartic acid. The ATPase activity is not potently stimulated by phosphatidylinositol 3-phosphate and phosphatidylinositol 5-phosphate, phosphatidylinositol 4,5-bisphosphate or phosphatidylcholine. Not inhibited by azide. In terms of biological role, catalytic component of a P4-ATPase flippase complex which catalyzes the hydrolysis of ATP coupled to the transport of phosphatidylserine and small amounts of ethanolamine from the lumen to the cytosolic leaflet of the trans-Golgi network and ensures the maintenance of asymmetric distribution of phospholipids. Contributes to clathrin-coated vesicle formation, endocytosis, and protein trafficking between the Golgi and endosomal system. Does not appear to transport phosphatidylcholine or sphingomyelin. The protein is Phospholipid-transporting ATPase DRS2 of Saccharomyces cerevisiae (strain ATCC 204508 / S288c) (Baker's yeast).